The chain runs to 111 residues: Disintegrin acostatin-alpha (111 aa).

A signal peptide spans 1 to 20; it reads MIQVLLVTLCLAVFPYQGSS. Residues 21 to 46 constitute a propeptide that is removed on maturation; that stretch reads IILESGNVNDYEVVYPRKVTALPKGA. A Disintegrin domain is found at 47-111; sequence IQPKNPCCDA…GDCPRKHFYA (65 aa). Residue Q48 is modified to Pyrrolidone carboxylic acid; in Disintegrin acostatin-alpha, processed form. Intrachain disulfides connect C53–C76, C67–C73, C72–C97, and C85–C104. The Cell attachment site signature appears at 89 to 91; that stretch reads RGD. Positions 110-111 are excised as a propeptide; the sequence is YA.

Belongs to the disintegrin family. Dimeric disintegrin subfamily. In terms of assembly, heterodimer with subunit beta; disulfide-linked. As to expression, expressed by the venom gland.

The protein localises to the secreted. Its function is as follows. Inhibits fibrinogen interaction with platelets. Acts by binding to alpha-IIb/beta-3 (ITGA2B/ITGB3) on the platelet surface and inhibits ADP-induced platelet aggregation in human platelet-rich plasma. The chain is Disintegrin acostatin-alpha from Agkistrodon contortrix contortrix (Southern copperhead).